Reading from the N-terminus, the 545-residue chain is Gamma-curcumene synthase (545 aa).

Residues Asp299, Asp303, Asn442, and Glu450 each contribute to the Mg(2+) site. A DDXXD motif motif is present at residues 299 to 303 (DDTYD).

Belongs to the terpene synthase family. Requires Mg(2+) as cofactor.

The protein localises to the cytoplasm. It localises to the cytosol. It carries out the reaction (2E,6E)-farnesyl diphosphate = gamma-curcumene + diphosphate. The protein operates within secondary metabolite biosynthesis; terpenoid biosynthesis. Sesquiterpene synthase involved in gamma-curcumene biosynthesis. This is Gamma-curcumene synthase from Pogostemon cablin (Patchouli).